Here is a 357-residue protein sequence, read N- to C-terminus: DNA replication and repair protein RecF (357 aa).

Residue 31–38 (GQNGAGKT) participates in ATP binding.

It belongs to the RecF family.

The protein resides in the cytoplasm. In terms of biological role, the RecF protein is involved in DNA metabolism; it is required for DNA replication and normal SOS inducibility. RecF binds preferentially to single-stranded, linear DNA. It also seems to bind ATP. This chain is DNA replication and repair protein RecF, found in Coxiella burnetii (strain Dugway 5J108-111).